A 553-amino-acid chain; its full sequence is Probable inactive serine/threonine-protein kinase samkD (553 aa).

In terms of domain architecture, SAM spans 24-90 (WDNETVCKWL…FEYQILKNCY (67 aa)). Residues 134–393 (YQYIETISKN…SKELLKSFWF (260 aa)) form the Protein kinase domain. ATP contacts are provided by residues 140 to 148 (ISKNKFCEI) and K165.

It belongs to the protein kinase superfamily. Ser/Thr protein kinase family.

This chain is Probable inactive serine/threonine-protein kinase samkD (samkD), found in Dictyostelium discoideum (Social amoeba).